The following is a 158-amino-acid chain: Serglycin (158 aa).

An N-terminal signal peptide occupies residues 1-27 (MMQKLLKCSRLVLALALILVLESSVQG). Cysteine 40 and cysteine 49 are disulfide-bonded. O-linked (Xyl...) (glycosaminoglycan) serine glycans are attached at residues serine 94 and serine 96. 9 repeat units span residues 94-95 (SG), 96-97 (SG), 98-99 (FG), 100-101 (SG), 102-103 (SG), 104-105 (SG), 106-107 (SG), 108-109 (SG), and 110-111 (SG). The segment at 94–111 (SGSGFGSGSGSGSGSGSG) is 9 X 2 AA tandem repeats of [SF]-G. Serine 100, serine 102, serine 104, serine 106, serine 108, and serine 110 each carry an O-linked (Xyl...) (glycosaminoglycan) serine glycan. The interval 134 to 158 (RSLDRNLPSDSQDLGQHGLEEDFML) is disordered.

This sequence belongs to the serglycin family. As to quaternary structure, binds to activated CD44 and to GZMB. In terms of processing, O-glycosylated; contains chondroitin sulfate and heparan sulfate.

The protein localises to the cytoplasmic granule. It is found in the cytolytic granule. Its subcellular location is the secreted. The protein resides in the extracellular space. It localises to the golgi apparatus. In terms of biological role, plays a role in formation of mast cell secretory granules and mediates storage of various compounds in secretory vesicles. Required for storage of some proteases in both connective tissue and mucosal mast cells and for storage of granzyme B in T-lymphocytes. Plays a role in localizing neutrophil elastase in azurophil granules of neutrophils. Mediates processing of MMP2. Plays a role in cytotoxic cell granule-mediated apoptosis by forming a complex with granzyme B which is delivered to cells by perforin to induce apoptosis. Regulates the secretion of TNF-alpha and may also regulate protease secretion. Inhibits bone mineralization. This is Serglycin (SRGN) from Homo sapiens (Human).